The primary structure comprises 525 residues: GMP synthase [glutamine-hydrolyzing] (525 aa).

A Glutamine amidotransferase type-1 domain is found at 8-206; it reads PLLILDFGSQ…VVDICKAPTE (199 aa). Residue C85 is the Nucleophile of the active site. Residues H180 and E182 contribute to the active site. One can recognise a GMPS ATP-PPase domain in the interval 207-400; it reads WTPEHIIDEA…LGLPHDMVYR (194 aa). ATP is bound at residue 234-240; that stretch reads SGGVDSS.

Homodimer.

The catalysed reaction is XMP + L-glutamine + ATP + H2O = GMP + L-glutamate + AMP + diphosphate + 2 H(+). It functions in the pathway purine metabolism; GMP biosynthesis; GMP from XMP (L-Gln route): step 1/1. Functionally, catalyzes the synthesis of GMP from XMP. The polypeptide is GMP synthase [glutamine-hydrolyzing] (Legionella pneumophila (strain Corby)).